The following is a 180-amino-acid chain: Translation machinery-associated protein 16 homolog (180 aa).

Over residues 1–12 (MTNLRKELEKCK) the composition is skewed to basic and acidic residues. The disordered stretch occupies residues 1-32 (MTNLRKELEKCKHPNSRKTKALGKKARRQNNK). Positions 13 to 32 (HPNSRKTKALGKKARRQNNK) are enriched in basic residues.

It belongs to the TMA16 family.

The polypeptide is Translation machinery-associated protein 16 homolog (Drosophila melanogaster (Fruit fly)).